A 408-amino-acid chain; its full sequence is S100P-binding protein (408 aa).

Disordered stretches follow at residues 1 to 111 (MMCS…AETP), 162 to 234 (KDET…SENP), and 271 to 291 (VSTS…MKGH). Over residues 28 to 59 (SLDEDGLDDSLLELSEGEEDDGDVNYTEEEID) the composition is skewed to acidic residues. 2 stretches are compositionally biased toward basic and acidic residues: residues 77–86 (DGGHVEKGER) and 162–185 (KDET…REDG). S187 is modified (phosphoserine). Over residues 188-234 (PNESKLCTESEGISPNNSAWNGPQLSSSNNNFQQTVSDKNMPDSENP) the composition is skewed to polar residues. Positions 280 to 291 (VLNKDSGKMKGH) are enriched in basic and acidic residues.

Interacts with S100P. As to expression, expressed in brain, spleen, and lung. Not detected in pancreas or liver. In pancreas, expressed predominantly in islet cells and to a lesser extent in acinar cells, but not expressed in ductal cells. Up-regulated in various pancreatic ductal adenocarcinomas and pancreatic intraepithelial neoplasias. Detected in pancreatic ductal adenocarcinoma cells (at protein level). Not detected in non-neoplastic ductal epithelium (at protein level).

It is found in the nucleus. The polypeptide is S100P-binding protein (Homo sapiens (Human)).